The primary structure comprises 213 residues: Inactive ribonuclease-like protein 10 (213 aa).

A signal peptide spans 1-24; it reads MKLTLVQIFFMMLLLLLGLGMGLG. N131 is a glycosylation site (N-linked (GlcNAc...) asparagine).

It belongs to the pancreatic ribonuclease family. In terms of processing, the N-terminus is blocked. Glycosylated. As to expression, male-specific expression in proximal caput of the epididymis.

It localises to the secreted. In terms of biological role, secreted proximal epididymal protein required for post-testicular sperm maturation and male fertility. May be involved in sperm adhesion to the egg zona pellucida. Does not have ribonuclease activity. In Equus caballus (Horse), this protein is Inactive ribonuclease-like protein 10 (RNASE10).